A 63-amino-acid polypeptide reads, in one-letter code: Adipokinetic prohormone type 1 (63 aa).

The N-terminal stretch at Met-1–Ala-22 is a signal peptide. At Gln-23 the chain carries Pyrrolidone carboxylic acid. Residue Thr-32 is modified to Threonine amide.

This sequence belongs to the AKH/HRTH/RPCH family.

The protein resides in the secreted. Its function is as follows. This hormone, released from cells in the corpora cardiaca, causes release of diglycerides from the fat body and stimulation of muscles to use these diglycerides as an energy source during energy-demanding processes. The chain is Adipokinetic prohormone type 1 from Locusta migratoria (Migratory locust).